The primary structure comprises 477 residues: Aspartyl/glutamyl-tRNA(Asn/Gln) amidotransferase subunit B (477 aa).

The protein belongs to the GatB/GatE family. GatB subfamily. In terms of assembly, heterotrimer of A, B and C subunits.

The catalysed reaction is L-glutamyl-tRNA(Gln) + L-glutamine + ATP + H2O = L-glutaminyl-tRNA(Gln) + L-glutamate + ADP + phosphate + H(+). The enzyme catalyses L-aspartyl-tRNA(Asn) + L-glutamine + ATP + H2O = L-asparaginyl-tRNA(Asn) + L-glutamate + ADP + phosphate + 2 H(+). In terms of biological role, allows the formation of correctly charged Asn-tRNA(Asn) or Gln-tRNA(Gln) through the transamidation of misacylated Asp-tRNA(Asn) or Glu-tRNA(Gln) in organisms which lack either or both of asparaginyl-tRNA or glutaminyl-tRNA synthetases. The reaction takes place in the presence of glutamine and ATP through an activated phospho-Asp-tRNA(Asn) or phospho-Glu-tRNA(Gln). In Ureaplasma parvum serovar 3 (strain ATCC 27815 / 27 / NCTC 11736), this protein is Aspartyl/glutamyl-tRNA(Asn/Gln) amidotransferase subunit B.